The chain runs to 294 residues: Putative isocitrate dehydrogenase [NAD] subunit-like 4 (294 aa).

It belongs to the isocitrate and isopropylmalate dehydrogenases family.

Functionally, performs an essential role in the oxidative function of the citric acid cycle. This chain is Putative isocitrate dehydrogenase [NAD] subunit-like 4 (IDH4), found in Arabidopsis thaliana (Mouse-ear cress).